A 93-amino-acid chain; its full sequence is Small ribosomal subunit protein uS19 (93 aa).

Belongs to the universal ribosomal protein uS19 family.

In terms of biological role, protein S19 forms a complex with S13 that binds strongly to the 16S ribosomal RNA. In Dehalococcoides mccartyi (strain ATCC BAA-2100 / JCM 16839 / KCTC 5957 / BAV1), this protein is Small ribosomal subunit protein uS19.